Reading from the N-terminus, the 293-residue chain is Thiamine-monophosphate kinase (293 aa).

Positions 25, 39, 40, 68, and 113 each coordinate Mg(2+). Residues 112 to 113 and arginine 136 contribute to the ATP site; that span reads GD. Aspartate 194 contacts Mg(2+). Position 196 (serine 196) interacts with ATP. Position 197 (aspartate 197) interacts with Mg(2+). Substrate-binding residues include glutamate 243 and tryptophan 286.

This sequence belongs to the thiamine-monophosphate kinase family. Homodimer.

It carries out the reaction thiamine phosphate + ATP = thiamine diphosphate + ADP. It participates in cofactor biosynthesis; thiamine diphosphate biosynthesis; thiamine diphosphate from thiamine phosphate: step 1/1. With respect to regulation, is inhibited by AMP; the mode of AMP inhibition is uncompetitive for both TMP and ATP. Its function is as follows. Catalyzes the ATP-dependent phosphorylation of thiamine-monophosphate (TMP) to form thiamine-pyrophosphate (TPP), the active form of vitamin B1. The polypeptide is Thiamine-monophosphate kinase (Pyrobaculum calidifontis (strain DSM 21063 / JCM 11548 / VA1)).